The chain runs to 191 residues: Protein NUCLEAR FUSION DEFECTIVE 2 (191 aa).

An N-terminal signal peptide occupies residues 1 to 29 (MATLRFTLLLLVFVVGIFFSFSSVSHVRA). Residues 48 to 167 (LAKLQTQIGY…IFGAIAIDAG (120 aa)) form the RNase III domain.

Its function is as follows. Required for karyogamy during female gametophyte development, when the two polar nuclei fuse to form the diploid central cell nucleus. This chain is Protein NUCLEAR FUSION DEFECTIVE 2, found in Arabidopsis thaliana (Mouse-ear cress).